The sequence spans 409 residues: Sperm equatorial segment protein 1 (409 aa).

An N-terminal signal peptide occupies residues 1-18 (MKPVVLVALLWLWPSSFL). N-linked (GlcNAc...) asparagine glycosylation is present at Asn-132. Residues 141–223 (EPYIEKEPEP…TTNTQGTPNT (83 aa)) form a disordered region. Acidic residues predominate over residues 167 to 177 (PEPEPESESAP). Polar residues predominate over residues 198–208 (NKVRTGTSRMS). A compositionally biased stretch (low complexity) spans 209–223 (TVITQTTNTQGTPNT).

It belongs to the SPESP1 family. Post-translationally, glycosylated. In testis there are two predominant forms of 77- and 67-kDa and a form of 47-kDa, whereas in epididymal sperm from caput, corpus, and cauda there are two forms of 47- and 43-kDa. Testis forms contain complex carbohydrate residues. Epididymal sperm forms are N-glycosylated. Then undergoes significant glycosylation in the testis and that the majority of these glycoconjugates are removed by the time sperm reach the caput epididymis.

It is found in the cytoplasmic vesicle. It localises to the secretory vesicle. The protein resides in the acrosome. Involved in fertilization ability of sperm. This is Sperm equatorial segment protein 1 from Rattus norvegicus (Rat).